The chain runs to 311 residues: Aspartate carbamoyltransferase catalytic subunit (311 aa).

Positions 55 and 56 each coordinate carbamoyl phosphate. An L-aspartate-binding site is contributed by Lys85. Residues Arg106, His135, and Gln138 each contribute to the carbamoyl phosphate site. L-aspartate is bound by residues Arg168 and Arg230. Carbamoyl phosphate contacts are provided by Leu268 and Pro269.

It belongs to the aspartate/ornithine carbamoyltransferase superfamily. ATCase family. In terms of assembly, heterododecamer (2C3:3R2) of six catalytic PyrB chains organized as two trimers (C3), and six regulatory PyrI chains organized as three dimers (R2).

It carries out the reaction carbamoyl phosphate + L-aspartate = N-carbamoyl-L-aspartate + phosphate + H(+). It functions in the pathway pyrimidine metabolism; UMP biosynthesis via de novo pathway; (S)-dihydroorotate from bicarbonate: step 2/3. Functionally, catalyzes the condensation of carbamoyl phosphate and aspartate to form carbamoyl aspartate and inorganic phosphate, the committed step in the de novo pyrimidine nucleotide biosynthesis pathway. This is Aspartate carbamoyltransferase catalytic subunit from Klebsiella pneumoniae (strain 342).